The following is a 265-amino-acid chain: 5'-nucleotidase SurE (265 aa).

A divalent metal cation contacts are provided by Asp8, Asp9, Ser40, and Asn98.

Belongs to the SurE nucleotidase family. It depends on a divalent metal cation as a cofactor.

It is found in the cytoplasm. The catalysed reaction is a ribonucleoside 5'-phosphate + H2O = a ribonucleoside + phosphate. In terms of biological role, nucleotidase that shows phosphatase activity on nucleoside 5'-monophosphates. This is 5'-nucleotidase SurE from Trichormus variabilis (strain ATCC 29413 / PCC 7937) (Anabaena variabilis).